The following is a 303-amino-acid chain: Elongation factor Ts (303 aa).

The interval 80–83 (TDFV) is involved in Mg(2+) ion dislocation from EF-Tu.

This sequence belongs to the EF-Ts family.

It is found in the cytoplasm. Its function is as follows. Associates with the EF-Tu.GDP complex and induces the exchange of GDP to GTP. It remains bound to the aminoacyl-tRNA.EF-Tu.GTP complex up to the GTP hydrolysis stage on the ribosome. The chain is Elongation factor Ts from Clostridium perfringens (strain SM101 / Type A).